We begin with the raw amino-acid sequence, 200 residues long: MAAAWTVVLVTLVLGLAVAGPVPTSKPTTTGKGCHIGRFKSLSPQELASFKKARDALEESLKLKNWSCSSPVFPGNWDLRLLQVRERPVALEAELALTLKVLEAAAGPALEDVLDQPLHTLHHILSQLQACIQPQPTAGPRPRGRLHHWLHRLQEAPKKESAGCLEASVTFNLFRLLTRDLKYVADGNLCLRTSTHPEST.

Positions 1 to 19 (MAAAWTVVLVTLVLGLAVA) are cleaved as a signal peptide. N-linked (GlcNAc...) asparagine glycosylation is present at Asn65. A disulfide bond links Cys68 and Cys164.

Belongs to the lambda interferon family.

Its subcellular location is the secreted. In terms of biological role, cytokine with antiviral, antitumour and immunomodulatory activities. Plays a critical role in the antiviral host defense, predominantly in the epithelial tissues. Acts as a ligand for the heterodimeric class II cytokine receptor composed of IL10RB and IFNLR1, and receptor engagement leads to the activation of the JAK/STAT signaling pathway resulting in the expression of IFN-stimulated genes (ISG), which mediate the antiviral state. Has a restricted receptor distribution and therefore restricted targets: is primarily active in epithelial cells and this cell type-selective action is because of the epithelial cell-specific expression of its receptor IFNLR1. Exerts an immunomodulatory effect by up-regulating MHC class I antigen expression. This Homo sapiens (Human) protein is Interferon lambda-1 (IFNL1).